Reading from the N-terminus, the 325-residue chain is tRNA(Ile)-lysidine synthase (325 aa).

ATP is bound at residue 34-39; it reads SGGADS.

This sequence belongs to the tRNA(Ile)-lysidine synthase family.

It localises to the cytoplasm. The catalysed reaction is cytidine(34) in tRNA(Ile2) + L-lysine + ATP = lysidine(34) in tRNA(Ile2) + AMP + diphosphate + H(+). Functionally, ligates lysine onto the cytidine present at position 34 of the AUA codon-specific tRNA(Ile) that contains the anticodon CAU, in an ATP-dependent manner. Cytidine is converted to lysidine, thus changing the amino acid specificity of the tRNA from methionine to isoleucine. In Rhodococcus opacus (strain B4), this protein is tRNA(Ile)-lysidine synthase.